The chain runs to 371 residues: Flagellar P-ring protein (371 aa).

The signal sequence occupies residues 1–25; it reads MKMRACKWLLTLAVAFAATLSSAYA.

The protein belongs to the FlgI family. In terms of assembly, the basal body constitutes a major portion of the flagellar organelle and consists of four rings (L,P,S, and M) mounted on a central rod.

Its subcellular location is the periplasm. The protein localises to the bacterial flagellum basal body. Functionally, assembles around the rod to form the L-ring and probably protects the motor/basal body from shearing forces during rotation. The protein is Flagellar P-ring protein of Sinorhizobium medicae (strain WSM419) (Ensifer medicae).